Consider the following 268-residue polypeptide: Shikimate dehydrogenase (NADP(+)) (268 aa).

Shikimate is bound by residues 13–15 (SLS) and T60. The active-site Proton acceptor is the K64. E76 is a binding site for NADP(+). The shikimate site is built by N85 and D100. NADP(+)-binding positions include 124-128 (GAGGA), 148-153 (NRTMAR), and I209. Shikimate is bound at residue Y211. An NADP(+)-binding site is contributed by G232.

Belongs to the shikimate dehydrogenase family. Homodimer.

It catalyses the reaction shikimate + NADP(+) = 3-dehydroshikimate + NADPH + H(+). It participates in metabolic intermediate biosynthesis; chorismate biosynthesis; chorismate from D-erythrose 4-phosphate and phosphoenolpyruvate: step 4/7. Functionally, involved in the biosynthesis of the chorismate, which leads to the biosynthesis of aromatic amino acids. Catalyzes the reversible NADPH linked reduction of 3-dehydroshikimate (DHSA) to yield shikimate (SA). The polypeptide is Shikimate dehydrogenase (NADP(+)) (Staphylococcus aureus (strain MRSA252)).